The following is a 452-amino-acid chain: Bifunctional purine biosynthesis protein PurH (452 aa).

Positions 1-115 constitute an MGS-like domain; sequence MKRILVSLYE…KNWKKVKPAF (115 aa).

It belongs to the PurH family.

The enzyme catalyses (6R)-10-formyltetrahydrofolate + 5-amino-1-(5-phospho-beta-D-ribosyl)imidazole-4-carboxamide = 5-formamido-1-(5-phospho-D-ribosyl)imidazole-4-carboxamide + (6S)-5,6,7,8-tetrahydrofolate. The catalysed reaction is IMP + H2O = 5-formamido-1-(5-phospho-D-ribosyl)imidazole-4-carboxamide. The protein operates within purine metabolism; IMP biosynthesis via de novo pathway; 5-formamido-1-(5-phospho-D-ribosyl)imidazole-4-carboxamide from 5-amino-1-(5-phospho-D-ribosyl)imidazole-4-carboxamide (10-formyl THF route): step 1/1. It participates in purine metabolism; IMP biosynthesis via de novo pathway; IMP from 5-formamido-1-(5-phospho-D-ribosyl)imidazole-4-carboxamide: step 1/1. The chain is Bifunctional purine biosynthesis protein PurH from Thermotoga maritima (strain ATCC 43589 / DSM 3109 / JCM 10099 / NBRC 100826 / MSB8).